A 7388-amino-acid chain; its full sequence is Microtubule-actin cross-linking factor 1, isoforms 1/2/3/4/5 (7388 aa).

The segment at 1–47 (MSSSDEETLSERSCRSERSCRSERSYRSERSGSLSPCPPGDTLPWNL) is disordered. The interval 1–295 (MSSSDEETLS…VITYVSSIYD (295 aa)) is actin-binding. Residue Ser-4 is modified to Phosphoserine. Positions 9 to 30 (LSERSCRSERSCRSERSYRSER) are enriched in basic and acidic residues. Ser-35 and Ser-57 each carry phosphoserine. 2 Calponin-homology (CH) domains span residues 78–181 (RVQK…LHFQ) and 194–298 (MSAK…DAFP). LRR repeat units follow at residues 148–171 (QRQVKLVNIRNDDITDGNPKLTLG) and 240–264 (LVDMERVQIQSNRENLEQAFEVAER). Position 280 is a phosphoserine (Ser-280). LRR repeat units follow at residues 377-399 (LYKLLEVWIEFGRIKLPQGYHPN) and 441-464 (LNCEEKLTLAKNTLQADAAHLESG). A Phosphoserine modification is found at Ser-814. Positions 868–925 (KNTISVKAVCDYRQIEITICKNDECVLEDNSQRTKWKVISPTGNEAMVPSVCFLIPPP) constitute an SH3 domain. Residues 1050-1073 (ISELKNIRLRLEEYEQRVVKRIQS) form an LRR 5 repeat. Ser-1122 is modified (phosphoserine). LRR repeat units lie at residues 1128–1154 (VPTLRSELNLLVEKMDHVYGLSTVYLN), 1187–1210 (LADLSALEAHWSTLRHWLSDVKDK), and 1257–1282 (HRVIAQLEIRQSELESIQEVLGDYRA). Ser-1367 and Ser-1376 each carry phosphoserine. 5 Plectin repeats span residues 1577–1621 (LVLL…RELQ), 1654–1696 (LKIL…VLES), 1769–1809 (RLLE…CAIL), 1811–1848 (RQLQTGGIIDTVTGQRLTIDEAVSNDLVAAKIALVILE), and 1855–1886 (GLLWPESGEILPITDALEQGIVSTELAHKILS). Ser-2006 and Ser-2051 each carry phosphoserine. The tract at residues 2051–2085 (SQNKEYPDREDCTTEKGKKTTVETEDSSVENPEQD) is disordered. Residues 2055–2072 (EYPDREDCTTEKGKKTTV) show a composition bias toward basic and acidic residues. Ser-2077 is modified (phosphoserine). Plectin repeat units follow at residues 2290–2332 (LNVL…KLME), 2367–2410 (NVLM…LERQ), 2411–2437 (VVTGGIIDLKRGKKVSVTLASTLGLVD), 2501–2543 (RLLT…LKRV), 2581–2612 (EVQAFTGNFVDLISGQRLTLAEAKKEGLLTNE), and 2686–2730 (LKVL…ASHQ). 2 disordered regions span residues 3013-3034 (EHDSHIKSQPREMTSSEKGKEA) and 3104-3174 (SEPF…NECK). The segment covering 3115-3124 (EGLHYQESDG) has biased composition (basic and acidic residues). Ser-3122 carries the phosphoserine modification. Residues 3129–3158 (TGPSQISKTDKSFQGTTRQETNYQDSWVTS) show a composition bias toward polar residues. LRR repeat units lie at residues 3239-3262 (LTGEKFLEMANPNVAGLEAGSIED) and 3264-3283 (VTQRGSRVLGSFLPEKLFKG). Residues 3321-3332 (EKTPQEKLRESP) show a composition bias toward basic and acidic residues. The disordered stretch occupies residues 3321–3350 (EKTPQEKLRESPGSEQTPFMTAPEGKGNGG). Ser-3331 carries the phosphoserine modification. 2 LRR repeats span residues 3646–3669 (QQDLSALQKNQSDLKDLQDDIQNR) and 3696–3720 (LTALREKLHQAKEQYEALQEETRVA). Spectrin repeat units follow at residues 3883 to 3957 (ELQK…NSFK) and 4000 to 4108 (QYHQ…SLLQ). The residue at position 3927 (Ser-3927) is a Phosphoserine. The stretch at 3936–3958 (KGDLRFVTISGQKVLDMENSFKE) is one LRR 13 repeat. LRR repeat units follow at residues 4125–4150 (LQSIGEVEQNLEGKQVSSLSSGVIQE) and 4261–4287 (IQELNLEMEDQQENLDTLEHLVTELSS). A Spectrin 3 repeat occupies 4466 to 4574 (RMEEVHKEAN…TVARQRQLEE (109 aa)). Residues Ser-4495, Ser-4496, and Ser-4521 each carry the phosphoserine modification. 3 LRR repeats span residues 4511 to 4534 (KAFLAELEQNSPKIQKVKEALAGL), 4601 to 4624 (GVLGPLSIDPNMLNAQKQQVQFML), and 4769 to 4792 (KKRLETVALPLQGLEDLAADRINR). Spectrin repeat units lie at residues 4800 to 4904 (TQQF…SRLK) and 4909 to 5012 (KAQK…SLEE). Ser-4836 and Ser-4962 each carry phosphoserine. LRR repeat units follow at residues 5051 to 5076 (NKNLEKLRAQQEVLQALEPQVDYLRN), 5172 to 5194 (NKIHVLKLDIEASEAECRHMLEE), and 5281 to 5304 (KEQVDPLQMKLQQVNGLGQGLIQS). Spectrin repeat units follow at residues 5236–5341 (EDFY…QLQE), 5348–5450 (KFQD…QLED), and 5455–5557 (AKQF…LRTL). Residue Thr-5435 is modified to Phosphothreonine. The interval 5583–5603 (EELATSGGQSPTGEQIPQFQQ) is disordered. Residues 5588–5603 (SGGQSPTGEQIPQFQQ) show a composition bias toward polar residues. 2 LRR repeats span residues 5695 to 5719 (MALGPIRLEQDQTTAQLQVQKAFSI) and 5804 to 5828 (AQLPSPAIDHEQLRQQQEEMRQLRE). Spectrin repeat units lie at residues 5783–5885 (NQFW…ALDE), 6005–6110 (LAEK…KLED), 6115–6219 (AVQY…HKLE), 6225–6328 (LGQF…QQLQ), 6333–6439 (QAQG…KLEE), 6443–6547 (LATE…RSLD), 6552–6658 (RAKQ…KLEE), 6665–6766 (QFMD…RLEQ), and 6771–6874 (AEVF…QRLE). A phosphoserine mark is found at Ser-5808 and Ser-6032. Lys-6210 bears the N6-acetyllysine mark. The LRR 24 repeat unit spans residues 6496–6519 (RDQIIELDQTGNQLKFLSQKQDVV). Residues 6951 to 6981 (PTHAPFIEKSRSGGRKSLSQPTPPPMPILSQ) form a disordered region. Residue Ser-6967 is modified to Phosphoserine. EF-hand domains follow at residues 7041-7076 (HKKSRVMDFFRRIDKDQDGKITRQEFIDGILASKFP) and 7077-7112 (TTKLEMTAVADIFDRDGDGYIDYYEFVAALHPNKDA). Positions 7054, 7056, 7058, 7060, 7065, 7090, 7092, 7094, 7096, and 7101 each coordinate Ca(2+). The GAR domain maps to 7117–7189 (TDADKIEDEV…EFLVKNDPCR (73 aa)). The C-terminal tail stretch occupies residues 7117–7388 (TDADKIEDEV…ASPRTPGPKR (272 aa)). The segment at 7205 to 7388 (PEGASQGMTP…ASPRTPGPKR (184 aa)) is disordered. Residues 7225-7259 (SSRAASPTRSSSSASQSNHSCTSMPSSPATPASGT) show a composition bias toward low complexity. Phosphothreonine is present on Thr-7254. Polar residues predominate over residues 7275–7299 (TFHSSRTSLAGDTSNSSSPASTGAK). Phosphoserine occurs at positions 7279 and 7292. A compositionally biased stretch (low complexity) spans 7310 to 7324 (SRPGSRAGSRAGSRA). Residues 7313-7328 (GSRAGSRAGSRASSRR) are 4 X 4 AA tandem repeats of [GS]-S-R-[AR]. Residues Ser-7330 and Ser-7333 each carry the phosphoserine modification. The segment covering 7339–7361 (ETQSACSDTSESSAAGGQGNSRR) has biased composition (polar residues).

This sequence belongs to the plakin or cytolinker family. In terms of assembly, isoform 2: Interacts with MAPRE1, CLASP1, CLASP2, AXIN1 and LRP6. Isoform 2: Found in a complex composed of MACF1, APC, AXIN1, CTNNB1 and GSK3B. Isoform 2: Interacts with GOLGA4. Isoform 2: Interacts with CAMSAP3. Phosphorylated on serine residues in the C-terminal tail by GSK3B. Phosphorylation inhibits microtubule-binding and this plays a critical role in bulge stem cell migration and skin wound repair. Wnt-signaling can repress phosphorylation. As to expression, isoform 2: Ubiquitously expressed. Isoform 1: Expressed in cell lines NCI-H460, A-549 and HaCaT. Isoform 4: Expressed in heart, lung, pituitary and placenta, not found in brain, kidney, liver, pancreas or skeletal muscle.

The protein resides in the cytoplasm. The protein localises to the cytoskeleton. Its subcellular location is the golgi apparatus. It localises to the cell membrane. It is found in the cell projection. The protein resides in the ruffle membrane. Functionally, F-actin-binding protein which plays a role in cross-linking actin to other cytoskeletal proteins and also binds to microtubules. Plays an important role in ERBB2-dependent stabilization of microtubules at the cell cortex. Acts as a positive regulator of Wnt receptor signaling pathway and is involved in the translocation of AXIN1 and its associated complex (composed of APC, CTNNB1 and GSK3B) from the cytoplasm to the cell membrane. Has actin-regulated ATPase activity and is essential for controlling focal adhesions (FAs) assembly and dynamics. Interaction with CAMSAP3 at the minus ends of non-centrosomal microtubules tethers microtubules minus-ends to actin filaments, regulating focal adhesion size and cell migration. May play role in delivery of transport vesicles containing GPI-linked proteins from the trans-Golgi network through its interaction with GOLGA4. Plays a key role in wound healing and epidermal cell migration. Required for efficient upward migration of bulge cells in response to wounding and this function is primarily rooted in its ability to coordinate microtubule dynamics and polarize hair follicle stem cells. As a regulator of actin and microtubule arrangement and stabilization, it plays an essential role in neurite outgrowth, branching and spine formation during brain development. The sequence is that of Microtubule-actin cross-linking factor 1, isoforms 1/2/3/4/5 from Homo sapiens (Human).